Here is a 189-residue protein sequence, read N- to C-terminus: Large ribosomal subunit protein bL9 (189 aa).

It belongs to the bacterial ribosomal protein bL9 family.

Binds to the 23S rRNA. In Cereibacter sphaeroides (strain ATCC 17025 / ATH 2.4.3) (Rhodobacter sphaeroides), this protein is Large ribosomal subunit protein bL9.